Consider the following 527-residue polypeptide: MPNPTVAIVGLGALGLVTLKNLREEGFDAVGLDRNDYVGGLWHFEEGNKLTVMRSTLSNGSKQRGCFTDFPFPEDSPDFIPAEGIDRYLKDYAKHFGLLEHCRLRTSFHGARYDEKKQQWRLSLSTPDAPEPHFEWFDKVVFAMGADQIPSRPKIEGIEKFKGHVEHSMSFKNPETLAGKRVMVLGFGNTAADMATELAPIADQVYLAHRHGAIIVPRWVKGKPVDHVRTYRKYVILNLMNRYTPGLWEKTMNSVIGKLVHNTFDLKPEWRFDPAPSITNQRPLVNDELIPSLEKGSIISTHGLARVIDENTVETSDGQRYEVDAILFCTGFTVDYSVVGMDADPCRATTTDWQKSRGFTGRPLPRLYQNIFSLDHPETLAFIGHLSFMNPAFFMFDLASMAVAQLWKDPSGFPSKAEMNKQVDDQHAWVIDLAKKGPVTPSIVKASEWMEWVDRVIGSGLPEHLGYTMKGWNFWMRDRKFCNIMMDGLLSPHAYRVFPGKRKAWPGARDAIIAMNADREARFGPMD.

The signal sequence occupies residues 1–19 (MPNPTVAIVGLGALGLVTL). N59 carries N-linked (GlcNAc...) asparagine glycosylation.

The protein belongs to the FMO family. In terms of assembly, might be part of an extracellular enzyme complex composed of GIP1, aurF, aurO and aurS. The cofactor is FAD.

The protein localises to the secreted. It localises to the extracellular space. It participates in pigment biosynthesis. In terms of biological role, monooxygenase; part of the gene cluster that mediates the biosynthesis of aurofusarin, a red mycelium pigment which is acting as a mycotoxin. The first step is performed by the polyketide synthase which condenses one acetyl-CoA and 6 malonyl-CoA units to form the first intermediate, the cyclic heptaketide and yellow pigment YWA1. The C2 hydroxyl group in the pyrone ring of YWA1 is probably formed during ring closure by an aldol-type cyclization reaction. The dehydratase aurZ then acts as the first tailoring enzyme in the aurofusarin biosynthetic pathway by converting YWA1 to nor-rubrofusarin. Nor-rubrofusarin is then methylated to rubrofusarin by the O-methyltransferase aurJ. Rubrofusarin is then transported across the plasma membrane by the rubrofusarin-specific pump aurT for further enzymatic processing by the extracellular complex composed of GIP1, aurF, aurO and aurS to yield aurofusarin. In Gibberella zeae (strain ATCC MYA-4620 / CBS 123657 / FGSC 9075 / NRRL 31084 / PH-1) (Wheat head blight fungus), this protein is Monooxygenase aurF.